Consider the following 575-residue polypeptide: Chaperonin CPN60-1, mitochondrial (575 aa).

The transit peptide at Met1 to Tyr32 directs the protein to the mitochondrion.

It belongs to the chaperonin (HSP60) family.

The protein resides in the mitochondrion. Its function is as follows. Implicated in mitochondrial protein import and macromolecular assembly. May facilitate the correct folding of imported proteins. May also prevent misfolding and promote the refolding and proper assembly of unfolded polypeptides generated under stress conditions in the mitochondrial matrix. The chain is Chaperonin CPN60-1, mitochondrial (CPN60-1) from Cucurbita maxima (Pumpkin).